The sequence spans 641 residues: Probable potassium transport system protein Kup (641 aa).

The segment covering 1-14 (MALDSESSASNRQG) has biased composition (polar residues). Positions 1–20 (MALDSESSASNRQGSRNEQD) are disordered. Helical transmembrane passes span 29-49 (LCLT…LYAF), 69-89 (ILSL…LLII), 120-140 (VLIV…MITP), 156-176 (PQLT…LFMV), 188-208 (FGPI…NGII), 236-256 (VLGG…DMGH), 267-287 (FALV…LLLL), 307-327 (LVGL…SGVF), 355-375 (VYVP…VLHF), 384-404 (AFGI…FFVM), 410-430 (WNIL…LAFF), and 437-457 (ITDG…LMIT).

This sequence belongs to the HAK/KUP transporter (TC 2.A.72) family.

It is found in the cell inner membrane. It carries out the reaction K(+)(in) + H(+)(in) = K(+)(out) + H(+)(out). In terms of biological role, transport of potassium into the cell. Likely operates as a K(+):H(+) symporter. The sequence is that of Probable potassium transport system protein Kup from Nitrosomonas eutropha (strain DSM 101675 / C91 / Nm57).